A 500-amino-acid polypeptide reads, in one-letter code: 4-aminobutyrate aminotransferase, mitochondrial (500 aa).

The N-terminal 28 residues, 1-28, are a transit peptide targeting the mitochondrion; sequence MASMLLAQRLACSFQHSYRLLVPGSRHI. C163 is a binding site for [2Fe-2S] cluster. Residue 164–165 coordinates pyridoxal 5'-phosphate; that stretch reads GS. Residue C166 coordinates [2Fe-2S] cluster. R220 is a binding site for substrate. K231 bears the N6-succinyllysine mark. At K252 the chain carries N6-acetyllysine; alternate. The residue at position 252 (K252) is an N6-succinyllysine; alternate. N6-acetyllysine is present on residues K279 and K318. K357 carries the N6-(pyridoxal phosphate)lysine modification. T381 serves as a coordination point for pyridoxal 5'-phosphate. K413 is modified (N6-acetyllysine; alternate). The residue at position 413 (K413) is an N6-succinyllysine; alternate. N6-acetyllysine occurs at positions 452 and 470.

Belongs to the class-III pyridoxal-phosphate-dependent aminotransferase family. In terms of assembly, homodimer; disulfide-linked. Pyridoxal 5'-phosphate serves as cofactor. Requires [2Fe-2S] cluster as cofactor. Liver &gt; pancreas &gt; brain &gt; kidney &gt; heart &gt; placenta.

The protein localises to the mitochondrion matrix. It catalyses the reaction 4-aminobutanoate + 2-oxoglutarate = succinate semialdehyde + L-glutamate. It carries out the reaction (S)-3-amino-2-methylpropanoate + 2-oxoglutarate = 2-methyl-3-oxopropanoate + L-glutamate. Functionally, catalyzes the conversion of gamma-aminobutyrate and L-beta-aminoisobutyrate to succinate semialdehyde and methylmalonate semialdehyde, respectively. Can also convert delta-aminovalerate and beta-alanine. This is 4-aminobutyrate aminotransferase, mitochondrial from Homo sapiens (Human).